The following is a 198-amino-acid chain: Na(+)-translocating NADH-quinone reductase subunit E (198 aa).

6 helical membrane passes run 11–31, 35–55, 77–97, 109–129, 140–160, and 176–196; these read AVFIENMALAFFLGMCTFLAV, VTTAFGLGIAVTVVLGISVPA, FLNFITFIGVIAALVQILEMI, LGIFLPLITVNCAIFGGVSFM, IVYGFGSGIGWMLAIVLLASI, and LGITFVTTGLMALGFMSFSGV.

The protein belongs to the NqrDE/RnfAE family. As to quaternary structure, composed of six subunits; NqrA, NqrB, NqrC, NqrD, NqrE and NqrF.

The protein localises to the cell inner membrane. It carries out the reaction a ubiquinone + n Na(+)(in) + NADH + H(+) = a ubiquinol + n Na(+)(out) + NAD(+). In terms of biological role, NQR complex catalyzes the reduction of ubiquinone-1 to ubiquinol by two successive reactions, coupled with the transport of Na(+) ions from the cytoplasm to the periplasm. NqrA to NqrE are probably involved in the second step, the conversion of ubisemiquinone to ubiquinol. This is Na(+)-translocating NADH-quinone reductase subunit E from Photorhabdus laumondii subsp. laumondii (strain DSM 15139 / CIP 105565 / TT01) (Photorhabdus luminescens subsp. laumondii).